A 119-amino-acid polypeptide reads, in one-letter code: Large ribosomal subunit protein bL20 (119 aa).

Belongs to the bacterial ribosomal protein bL20 family.

Functionally, binds directly to 23S ribosomal RNA and is necessary for the in vitro assembly process of the 50S ribosomal subunit. It is not involved in the protein synthesizing functions of that subunit. This chain is Large ribosomal subunit protein bL20, found in Dehalococcoides mccartyi (strain ATCC BAA-2100 / JCM 16839 / KCTC 5957 / BAV1).